Reading from the N-terminus, the 153-residue chain is Transcriptional repressor NrdR (153 aa).

A zinc finger spans residues 3-34 (CPFCGHLEDRVIDSRAGGAGEVIRRRRECASC). Positions 49–139 (PTVVKKDGRR…VYRSFRDIDQ (91 aa)) constitute an ATP-cone domain.

It belongs to the NrdR family. It depends on Zn(2+) as a cofactor.

In terms of biological role, negatively regulates transcription of bacterial ribonucleotide reductase nrd genes and operons by binding to NrdR-boxes. This chain is Transcriptional repressor NrdR, found in Sorangium cellulosum (strain So ce56) (Polyangium cellulosum (strain So ce56)).